The primary structure comprises 161 residues: S-ribosylhomocysteine lyase (161 aa).

3 residues coordinate Fe cation: His-57, His-61, and Cys-127.

This sequence belongs to the LuxS family. As to quaternary structure, homodimer. It depends on Fe cation as a cofactor.

It catalyses the reaction S-(5-deoxy-D-ribos-5-yl)-L-homocysteine = (S)-4,5-dihydroxypentane-2,3-dione + L-homocysteine. Functionally, involved in the synthesis of autoinducer 2 (AI-2) which is secreted by bacteria and is used to communicate both the cell density and the metabolic potential of the environment. The regulation of gene expression in response to changes in cell density is called quorum sensing. Catalyzes the transformation of S-ribosylhomocysteine (RHC) to homocysteine (HC) and 4,5-dihydroxy-2,3-pentadione (DPD). The sequence is that of S-ribosylhomocysteine lyase from Streptococcus equi subsp. zooepidemicus (strain H70).